The chain runs to 149 residues: Small ribosomal subunit protein uS15 (149 aa).

Residues 1–11 (MARMHSRDRGK) show a composition bias toward basic and acidic residues. Residues 1–25 (MARMHSRDRGKSGSTRPPRVAPPSW) are disordered.

The protein belongs to the universal ribosomal protein uS15 family. As to quaternary structure, part of the 30S ribosomal subunit.

In Methanopyrus kandleri (strain AV19 / DSM 6324 / JCM 9639 / NBRC 100938), this protein is Small ribosomal subunit protein uS15.